Here is a 406-residue protein sequence, read N- to C-terminus: CRISP/Allergen/PR-1 (406 aa).

The first 18 residues, 1–18 (MHFQVILMMMWLWLEAEG), serve as a signal peptide directing secretion. Asn39 is a glycosylation site (N-linked (GlcNAc...) asparagine). Residues 58-205 (LREHNKLRSR…TFKDLYTCNY (148 aa)) enclose the SCP domain.

The protein belongs to the CRISP family. Contains 9 disulfide bonds. As to expression, expressed by the venom gland.

Its subcellular location is the secreted. This chain is CRISP/Allergen/PR-1, found in Trittame loki (Brush-footed trapdoor spider).